A 790-amino-acid polypeptide reads, in one-letter code: Type VI secretion system spike protein VgrG5 (790 aa).

2 stretches are compositionally biased toward basic and acidic residues: residues Gly753–Gln763 and Ala772–Pro790. Positions Gly753–Pro790 are disordered.

It belongs to the VgrG protein family.

It is found in the secreted. Part of the H2 type VI secretion system (H2-T6SS) specialized secretion system, which delivers several virulence factors in both prokaryotic and eukaryotic cells during infection. Allows the delivery of the phospholipase effector PldB to target cells where it exerts its toxicity. Also plays a role in VgrG4b and its effector PldA secretion. This Pseudomonas aeruginosa (strain ATCC 15692 / DSM 22644 / CIP 104116 / JCM 14847 / LMG 12228 / 1C / PRS 101 / PAO1) protein is Type VI secretion system spike protein VgrG5.